Consider the following 525-residue polypeptide: D-3-phosphoglycerate dehydrogenase (525 aa).

NAD(+) is bound by residues 148–149 (RI), D168, T200, 227–229 (CAR), and D253. The active site involves R229. E258 is a catalytic residue. H276 functions as the Proton donor in the catalytic mechanism. 276–279 (HLGA) contributes to the NAD(+) binding site. An ACT domain is found at 452–524 (LVYIQHQDTT…DIVSVKLIDL (73 aa)).

This sequence belongs to the D-isomer specific 2-hydroxyacid dehydrogenase family.

It carries out the reaction (2R)-3-phosphoglycerate + NAD(+) = 3-phosphooxypyruvate + NADH + H(+). The enzyme catalyses (R)-2-hydroxyglutarate + NAD(+) = 2-oxoglutarate + NADH + H(+). It participates in amino-acid biosynthesis; L-serine biosynthesis; L-serine from 3-phospho-D-glycerate: step 1/3. Its activity is regulated as follows. In bacteria displays feedback inhibition by L-serine. Its function is as follows. Catalyzes the reversible oxidation of 3-phospho-D-glycerate to 3-phosphonooxypyruvate, the first step of the phosphorylated L-serine biosynthesis pathway. Also catalyzes the reversible oxidation of 2-hydroxyglutarate to 2-oxoglutarate. This Bacillus subtilis (strain 168) protein is D-3-phosphoglycerate dehydrogenase (serA).